The following is a 119-amino-acid chain: Large ribosomal subunit protein bL20 (119 aa).

Belongs to the bacterial ribosomal protein bL20 family.

In terms of biological role, binds directly to 23S ribosomal RNA and is necessary for the in vitro assembly process of the 50S ribosomal subunit. It is not involved in the protein synthesizing functions of that subunit. In Bordetella petrii (strain ATCC BAA-461 / DSM 12804 / CCUG 43448), this protein is Large ribosomal subunit protein bL20.